The primary structure comprises 204 residues: MKVKICGITDVETAKCACEYGADAIGFVFAESKRKITLGLAKEIIGKLPAHVLKIGVFVNESVEVIQKIADECGLTHVQLHGDEENHQIRRLNIPSIKSLGVTSESDMKSAQAYETDYILFDSPKEKFHGGNGKTFSWELLEHMPKELRKKTILAGGLNILNIEEAIRTVRPYMVDVSSGVETEGKKDLKKIKQFIIKSKECSK.

This sequence belongs to the TrpF family.

It carries out the reaction N-(5-phospho-beta-D-ribosyl)anthranilate = 1-(2-carboxyphenylamino)-1-deoxy-D-ribulose 5-phosphate. It participates in amino-acid biosynthesis; L-tryptophan biosynthesis; L-tryptophan from chorismate: step 3/5. This Bacillus cereus (strain G9842) protein is N-(5'-phosphoribosyl)anthranilate isomerase.